Reading from the N-terminus, the 308-residue chain is Mitochondrial import receptor subunit TOM40B (308 aa).

The tract at residues 1–29 (MGNTLGLAPMGTLPRRSPRREEPLPNPGS) is disordered. The required for mitochondrial targeting stretch occupies residues 281-308 (PLPVTLALGAFLNHWRNRFHCGFSITVG).

It belongs to the Tom40 family. As to quaternary structure, forms part of the preprotein translocase of the outer mitochondrial membrane (TOM complex) containing TOMM22, TOMM40, TOMM40L and TOMM70. Interacts with mitochondrial targeting sequences.

It is found in the mitochondrion outer membrane. In terms of biological role, potential channel-forming protein implicated in import of protein precursors into mitochondria. The chain is Mitochondrial import receptor subunit TOM40B (TOMM40L) from Homo sapiens (Human).